A 160-amino-acid polypeptide reads, in one-letter code: Cyclic pyranopterin monophosphate synthase (160 aa).

Substrate is bound by residues 76-78 and 113-114; these read MCH and ME. D128 is a catalytic residue.

The protein belongs to the MoaC family. Homohexamer; trimer of dimers.

It carries out the reaction (8S)-3',8-cyclo-7,8-dihydroguanosine 5'-triphosphate = cyclic pyranopterin phosphate + diphosphate. Its pathway is cofactor biosynthesis; molybdopterin biosynthesis. Catalyzes the conversion of (8S)-3',8-cyclo-7,8-dihydroguanosine 5'-triphosphate to cyclic pyranopterin monophosphate (cPMP). In Brevibacillus brevis (strain 47 / JCM 6285 / NBRC 100599), this protein is Cyclic pyranopterin monophosphate synthase.